Reading from the N-terminus, the 379-residue chain is Succinyl-diaminopimelate desuccinylase (379 aa).

A Zn(2+)-binding site is contributed by His-68. Asp-70 is a catalytic residue. Asp-101 contributes to the Zn(2+) binding site. The Proton acceptor role is filled by Glu-134. 3 residues coordinate Zn(2+): Glu-135, Glu-163, and His-352.

This sequence belongs to the peptidase M20A family. DapE subfamily. Homodimer. It depends on Zn(2+) as a cofactor. The cofactor is Co(2+).

It carries out the reaction N-succinyl-(2S,6S)-2,6-diaminopimelate + H2O = (2S,6S)-2,6-diaminopimelate + succinate. It functions in the pathway amino-acid biosynthesis; L-lysine biosynthesis via DAP pathway; LL-2,6-diaminopimelate from (S)-tetrahydrodipicolinate (succinylase route): step 3/3. Catalyzes the hydrolysis of N-succinyl-L,L-diaminopimelic acid (SDAP), forming succinate and LL-2,6-diaminopimelate (DAP), an intermediate involved in the bacterial biosynthesis of lysine and meso-diaminopimelic acid, an essential component of bacterial cell walls. The polypeptide is Succinyl-diaminopimelate desuccinylase (Dinoroseobacter shibae (strain DSM 16493 / NCIMB 14021 / DFL 12)).